A 149-amino-acid polypeptide reads, in one-letter code: Histone H2A (149 aa).

Over residues 1-23 (METAGKAKKGFGGRKGGPRKKSV) the composition is skewed to basic residues. Disordered regions lie at residues 1–25 (META…SVTR) and 127–149 (KTAE…PKKA). Basic and acidic residues predominate over residues 127-138 (KTAEKAAKEPKS). 2 short sequence motifs (SPKK motif) span residues 138–141 (SPSK) and 145–148 (SPKK).

Belongs to the histone H2A family. In terms of assembly, the nucleosome is a histone octamer containing two molecules each of H2A, H2B, H3 and H4 assembled in one H3-H4 heterotetramer and two H2A-H2B heterodimers. The octamer wraps approximately 147 bp of DNA.

Its subcellular location is the nucleus. The protein resides in the chromosome. Core component of nucleosome. Nucleosomes wrap and compact DNA into chromatin, limiting DNA accessibility to the cellular machineries which require DNA as a template. Histones thereby play a central role in transcription regulation, DNA repair, DNA replication and chromosomal stability. DNA accessibility is regulated via a complex set of post-translational modifications of histones, also called histone code, and nucleosome remodeling. The polypeptide is Histone H2A (Petroselinum crispum (Parsley)).